A 464-amino-acid polypeptide reads, in one-letter code: Macrophage metalloelastase (464 aa).

An N-terminal signal peptide occupies residues 1 to 17; the sequence is MKFLLLILTLWVTSSGA. A propeptide spans 18–100 (activation peptide); that stretch reads DPLKENDMLF…DVYHFKTMPG (83 aa). Asparagine 69 carries an N-linked (GlcNAc...) asparagine glycan. Positions 85–92 match the Cysteine switch motif; the sequence is PRCGVPDV. Cysteine 87 lines the Zn(2+) pocket. 2 residues coordinate Ca(2+): aspartate 119 and aspartate 153. Histidine 163 and aspartate 165 together coordinate Zn(2+). The Ca(2+) site is built by aspartate 170, glycine 171, glycine 173, and valine 175. Zn(2+) is bound at residue histidine 178. 3 residues coordinate Ca(2+): glycine 185, glycine 187, and aspartate 189. Histidine 191 is a binding site for Zn(2+). Aspartate 193, glutamate 194, and glutamate 196 together coordinate Ca(2+). Histidine 213 contributes to the Zn(2+) binding site. Glutamate 214 is an active-site residue. 2 residues coordinate Zn(2+): histidine 217 and histidine 223. Hemopexin repeat units follow at residues 274–323, 324–370, 372–420, and 421–464; these read PTAC…WPTL, PSGI…GFPD, VKKI…FPGI, and GPKI…WFDC. Cysteine 277 and cysteine 464 form a disulfide bridge. Aspartate 284, glutamate 328, aspartate 376, and aspartate 425 together coordinate Ca(2+).

It belongs to the peptidase M10A family. It depends on Ca(2+) as a cofactor. Requires Zn(2+) as cofactor.

The protein resides in the secreted. The protein localises to the extracellular space. Its subcellular location is the extracellular matrix. The enzyme catalyses Hydrolysis of soluble and insoluble elastin. Specific cleavages are also produced at 14-Ala-|-Leu-15 and 16-Tyr-|-Leu-17 in the B chain of insulin.. In terms of biological role, may be involved in tissue injury and remodeling. Has significant elastolytic activity. Can accept large and small amino acids at the P1' site, but has a preference for leucine. Aromatic or hydrophobic residues are preferred at the P1 site, with small hydrophobic residues (preferably alanine) occupying P3. The protein is Macrophage metalloelastase (MMP12) of Oryctolagus cuniculus (Rabbit).